A 480-amino-acid polypeptide reads, in one-letter code: Cytochrome b-c1 complex subunit 1, mitochondrial (480 aa).

Residues Met-1–Gly-34 constitute a mitochondrion transit peptide. N6-acetyllysine is present on residues Lys-111 and Lys-138. Residue Lys-163 is modified to N6-acetyllysine; alternate. N6-succinyllysine; alternate is present on Lys-163. Ser-212 is modified (phosphoserine). Thr-214 is subject to Phosphothreonine.

It belongs to the peptidase M16 family. UQCRC1/QCR1 subfamily. Component of the ubiquinol-cytochrome c oxidoreductase (cytochrome b-c1 complex, complex III, CIII), a multisubunit enzyme composed of 11 subunits. The complex is composed of 3 respiratory subunits cytochrome b, cytochrome c1 and Rieske protein UQCRFS1, 2 core protein subunits UQCRC1/QCR1 and UQCRC2/QCR2, and 6 low-molecular weight protein subunits UQCRH/QCR6, UQCRB/QCR7, UQCRQ/QCR8, UQCR10/QCR9, UQCR11/QCR10 and subunit 9, the cleavage product of Rieske protein UQCRFS1. The complex exists as an obligatory dimer and forms supercomplexes (SCs) in the inner mitochondrial membrane with NADH-ubiquinone oxidoreductase (complex I, CI) and cytochrome c oxidase (complex IV, CIV), resulting in different assemblies (supercomplex SCI(1)III(2)IV(1) and megacomplex MCI(2)III(2)IV(2)). Interacts with UQCC6. Interacts with STMP1.

The protein localises to the mitochondrion inner membrane. Functionally, component of the ubiquinol-cytochrome c oxidoreductase, a multisubunit transmembrane complex that is part of the mitochondrial electron transport chain which drives oxidative phosphorylation. The respiratory chain contains 3 multisubunit complexes succinate dehydrogenase (complex II, CII), ubiquinol-cytochrome c oxidoreductase (cytochrome b-c1 complex, complex III, CIII) and cytochrome c oxidase (complex IV, CIV), that cooperate to transfer electrons derived from NADH and succinate to molecular oxygen, creating an electrochemical gradient over the inner membrane that drives transmembrane transport and the ATP synthase. The cytochrome b-c1 complex catalyzes electron transfer from ubiquinol to cytochrome c, linking this redox reaction to translocation of protons across the mitochondrial inner membrane, with protons being carried across the membrane as hydrogens on the quinol. In the process called Q cycle, 2 protons are consumed from the matrix, 4 protons are released into the intermembrane space and 2 electrons are passed to cytochrome c. The 2 core subunits UQCRC1/QCR1 and UQCRC2/QCR2 are homologous to the 2 mitochondrial-processing peptidase (MPP) subunits beta-MPP and alpha-MPP respectively, and they seem to have preserved their MPP processing properties. May be involved in the in situ processing of UQCRFS1 into the mature Rieske protein and its mitochondrial targeting sequence (MTS)/subunit 9 when incorporated into complex III. Seems to play an important role in the maintenance of proper mitochondrial function in nigral dopaminergic neurons. The sequence is that of Cytochrome b-c1 complex subunit 1, mitochondrial (Uqcrc1) from Rattus norvegicus (Rat).